The primary structure comprises 389 residues: MVTVDEVRKAQRAQGPATIMAIGTATPPNCVDQSTYPDYYFRITNSEHMTDLKEKFKRMCDKSMIKKRYMYLTEEILKENPNVCAYMAPSLDTRQDMVVVEVPRLGKAATEAIKEWGQPKSKITHLVFCTTSGVDMPGADYRLTKLLGLRPSVKRLMMYQQGCFAGGTVLRLAKDLAENNKGARVLVVCSEITAVTFRGPSDTHLDSLVGQALFGDGAAAIIIGADPIPEIEKPMFELVSTAQTILPDSDGSIDGHLREAGLTFHLLKDVPGLISKNIQKSLTEAFKPLGISDWNSIFWIAHPGGPAILDQVEEKLGLKPEKLRATRHVLSEYGNMSSACVLFILDEMRKKSAEDGLETAGEGLEWGVLFGFGPGLTVETVVLHSVAAA.

The active site involves cysteine 163.

Belongs to the thiolase-like superfamily. Chalcone/stilbene synthases family.

The catalysed reaction is (E)-4-coumaroyl-CoA + 3 malonyl-CoA + 3 H(+) = 2',4,4',6'-tetrahydroxychalcone + 3 CO2 + 4 CoA. The protein operates within secondary metabolite biosynthesis; flavonoid biosynthesis. The primary product of this enzyme is 4,2',4',6'-tetrahydroxychalcone (also termed naringenin-chalcone or chalcone) which can under specific conditions spontaneously isomerize into naringenin. The chain is Chalcone synthase 1 (CHS1) from Citrus sinensis (Sweet orange).